A 306-amino-acid chain; its full sequence is Curved DNA-binding protein (306 aa).

The J domain maps to 5-69 (DYYAIMGVKP…QRRAEYDQMW (65 aa)).

The protein resides in the cytoplasm. Its subcellular location is the nucleoid. Its function is as follows. DNA-binding protein that preferentially recognizes a curved DNA sequence. It is probably a functional analog of DnaJ; displays overlapping activities with DnaJ, but functions under different conditions, probably acting as a molecular chaperone in an adaptive response to environmental stresses other than heat shock. Lacks autonomous chaperone activity; binds native substrates and targets them for recognition by DnaK. Its activity is inhibited by the binding of CbpM. In Escherichia coli (strain SMS-3-5 / SECEC), this protein is Curved DNA-binding protein.